The chain runs to 66 residues: Conotoxin Cal5.2 (66 aa).

Residues 1–20 (MMYCLPVVCILLLLIPSSAT) form the signal peptide. A propeptide spanning residues 21-51 (FVVESRLEKDQAQSFTGDAWKRVSPIHEMIQ) is cleaved from the precursor. The residue at position 65 (valine 65) is a Valine amide.

It belongs to the conotoxin T superfamily. In terms of processing, contains 2 disulfide bonds that can be either 'C1-C3, C2-C4' or 'C1-C4, C2-C3', since these disulfide connectivities have been observed for conotoxins with cysteine framework V (for examples, see AC P0DQQ7 and AC P81755). As to expression, expressed by the venom duct.

The protein resides in the secreted. Probable neurotoxin with unknown target. Possibly targets ion channels. The protein is Conotoxin Cal5.2 of Californiconus californicus (California cone).